Consider the following 130-residue polypeptide: Small ribosomal subunit protein uS8 (130 aa).

The protein belongs to the universal ribosomal protein uS8 family. As to quaternary structure, part of the 30S ribosomal subunit. Contacts proteins S5 and S12.

Its function is as follows. One of the primary rRNA binding proteins, it binds directly to 16S rRNA central domain where it helps coordinate assembly of the platform of the 30S subunit. This Pseudomonas entomophila (strain L48) protein is Small ribosomal subunit protein uS8.